We begin with the raw amino-acid sequence, 137 residues long: MPTINQLVRKGRKSKSSKSDAPALNYGYNSFKKAQVKNPAPQKRGVATRVGTMTPKKPNSALRKYARVRLSNLIEVTAYIPGIGHNLQEHSVVLIRGGRVKDLPGVRYHIIRGALDTAGVTDRRQGRSKYGTKKPKG.

The interval 1–23 is disordered; sequence MPTINQLVRKGRKSKSSKSDAPA. D102 carries the 3-methylthioaspartic acid modification.

This sequence belongs to the universal ribosomal protein uS12 family. Part of the 30S ribosomal subunit. Contacts proteins S8 and S17. May interact with IF1 in the 30S initiation complex.

In terms of biological role, with S4 and S5 plays an important role in translational accuracy. Functionally, interacts with and stabilizes bases of the 16S rRNA that are involved in tRNA selection in the A site and with the mRNA backbone. Located at the interface of the 30S and 50S subunits, it traverses the body of the 30S subunit contacting proteins on the other side and probably holding the rRNA structure together. The combined cluster of proteins S8, S12 and S17 appears to hold together the shoulder and platform of the 30S subunit. This chain is Small ribosomal subunit protein uS12, found in Levilactobacillus brevis (strain ATCC 367 / BCRC 12310 / CIP 105137 / JCM 1170 / LMG 11437 / NCIMB 947 / NCTC 947) (Lactobacillus brevis).